The primary structure comprises 499 residues: Potassium voltage-gated channel subfamily A member 2 (499 aa).

Residues 1 to 26 (MTVATEDPADEAAALPGHPQDTYDPE) form a disordered region. The tetramerization domain stretch occupies residues 1-125 (MTVATEDPAD…YELGEEAMEM (125 aa)). The Cytoplasmic segment spans residues 1 to 160 (MTVATEDPAD…LLFEYPESSG (160 aa)). A helical membrane pass occupies residues 161 to 182 (PARIIAIVSVMVILISIVSFCL). The Extracellular segment spans residues 183–221 (ETLPIFRDENEDMHGSGMTFHTYSNSTAGYQQSTSFTDP). Residue Asn-207 is glycosylated (N-linked (GlcNAc...) asparagine). Residues 222-243 (FFIVETLCIIWFSFEFLVRFFA) form a helical membrane-spanning segment. Residue Cys-244 is the site of S-palmitoyl cysteine attachment. The Cytoplasmic segment spans residues 244–254 (CPSKAGFFTNI). A helical transmembrane segment spans residues 255–275 (MNIIDIVAIIPYFITLGTELA). Topologically, residues 276-289 (EKPEDAQQGQQAMS) are extracellular. Residues 290-310 (LAILRVIRLVRVFRIFKLSRH) traverse the membrane as a helical; Voltage-sensor segment. Topologically, residues 311–325 (SKGLQILGQTLKASM) are cytoplasmic. An S4-S5 linker region spans residues 312-325 (KGLQILGQTLKASM). Residues 326-347 (RELGLLIFFLFIGVILFSSAVY) traverse the membrane as a helical segment. The Extracellular portion of the chain corresponds to 348–361 (FAEADERDSQFPSI). Positions 362-373 (PDAFWWAVVSMT) form an intramembrane region, helical. A Selectivity filter motif is present at residues 374–379 (TVGYGD). Residues 374-381 (TVGYGDMV) lie within the membrane without spanning it. At 382–388 (PTTIGGK) the chain is on the extracellular side. The helical transmembrane segment at 389 to 417 (IVGSLCAIAGVLTIALPVPVIVSNFNYFY) threads the bilayer. Residues 418–499 (HRETEGEEQA…VNITKMLTDV (82 aa)) are Cytoplasmic-facing. A Phosphotyrosine modification is found at Tyr-429. Phosphoserine occurs at positions 434, 440, 441, and 449. Tyr-458 carries the phosphotyrosine modification. A Phosphoserine modification is found at Ser-468. A PDZ-binding motif is present at residues 497 to 499 (TDV).

The protein belongs to the potassium channel family. A (Shaker) (TC 1.A.1.2) subfamily. Kv1.2/KCNA2 sub-subfamily. As to quaternary structure, homotetramer and heterotetramer with other channel-forming alpha subunits, such as KCNA1, KCNA4, KCNA5, KCNA6 and KCNA7. Channel activity is regulated by interaction with the beta subunits, including KCNAB1 and KCNAB2. Identified in a complex with KCNA1 and KCNAB2. Identified in a complex with KCNA4 and FYN. Identified in a complex with KCNA5 and KCNAB1. Interacts with the beta subunit KCNAB1. Interacts with PTK2B. Interacts (via C-terminus) with CTTN. Interacts (via N-terminal cytoplasmic domain) with RHOA (GTP-bound form); this regulates channel activity by reducing location at the cell surface in response to CHRM1 activation. Interacts with DRD2. Interacts with SIGMAR1; cocaine consumption leads to increased interaction. Interacts with ADAM22. Interacts with CNTNAP2. Interacts (via C-terminus) with the PDZ domains of DLG1, DLG2 and DLG4. Interacts with ADAM11. Interacts with LYNX1. Phosphorylated on tyrosine residues; phosphorylation increases in response to ischemia. Phosphorylated on tyrosine residues by activated PTK2B/PYK2. Phosphorylation on tyrosine residues suppresses ion channel activity. Phosphorylated on tyrosine residues in response to CHRM1 activation; this abolishes interaction with CTTN. This is probably due to endocytosis of the phosphorylated channel subunits. Phosphorylated on serine residues in response to increased cAMP levels; phosphorylation is apparently not catalyzed by PKA. Post-translationally, N-glycosylated, with complex, sialylated N-glycans. In terms of tissue distribution, detected in portal vein myocytes (at protein level). Detected in portal vein. Brain, liver and kidney.

It is found in the cell membrane. The protein resides in the membrane. The protein localises to the cell projection. Its subcellular location is the axon. It localises to the synapse. It is found in the presynaptic cell membrane. The protein resides in the synaptosome. The protein localises to the endoplasmic reticulum membrane. Its subcellular location is the dendrite. It localises to the lamellipodium membrane. It is found in the cell junction. The protein resides in the paranodal septate junction. The catalysed reaction is K(+)(in) = K(+)(out). Inhibited by 4-aminopyridine (4-AP). Inhibited by dendrotoxin (DTX) and charybdotoxin (CTX), but not by tetraethylammonium (TEA). Inhibited by tityustoxin-K alpha (TsTX-Kalpha), a toxin that is highly specific for KCNA2. Inhibited by maurotoxin. Inhibited by kappaM conotoxins kappaM-RIIIJ and kappaM-RIIIK. In terms of biological role, voltage-gated potassium channel that mediates transmembrane potassium transport in excitable membranes, primarily in the brain and the central nervous system, but also in the cardiovascular system. Prevents aberrant action potential firing and regulates neuronal output. Forms tetrameric potassium-selective channels through which potassium ions pass in accordance with their electrochemical gradient. The channel alternates between opened and closed conformations in response to the voltage difference across the membrane. Can form functional homotetrameric channels and heterotetrameric channels that contain variable proportions of KCNA1, KCNA2, KCNA4, KCNA5, KCNA6, KCNA7, and possibly other family members as well; channel properties depend on the type of alpha subunits that are part of the channel. Channel properties are modulated by cytoplasmic beta subunits that regulate the subcellular location of the alpha subunits and promote rapid inactivation of delayed rectifier potassium channels. In vivo, membranes probably contain a mixture of heteromeric potassium channel complexes, making it difficult to assign currents observed in intact tissues to any particular potassium channel family member. Homotetrameric KCNA2 forms a delayed-rectifier potassium channel that opens in response to membrane depolarization, followed by slow spontaneous channel closure. In contrast, a heteromultimer formed by KCNA2 and KCNA4 shows rapid inactivation. Regulates neuronal excitability and plays a role as pacemaker in the regulation of neuronal action potentials. KCNA2-containing channels play a presynaptic role and prevent hyperexcitability and aberrant action potential firing. Response to toxins that are selective for KCNA2-containing potassium channels suggests that in Purkinje cells, dendritic subthreshold KCNA2-containing potassium channels prevent random spontaneous calcium spikes, suppressing dendritic hyperexcitability without hindering the generation of somatic action potentials, and thereby play an important role in motor coordination. Plays a role in the induction of long-term potentiation of neuron excitability in the CA3 layer of the hippocampus. May function as down-stream effector for G protein-coupled receptors and inhibit GABAergic inputs to basolateral amygdala neurons. May contribute to the regulation of neurotransmitter release, such as gamma-aminobutyric acid (GABA). Contributes to the regulation of the axonal release of the neurotransmitter dopamine. Reduced KCNA2 expression plays a role in the perception of neuropathic pain after peripheral nerve injury, but not acute pain. Plays a role in the regulation of the time spent in non-rapid eye movement (NREM) sleep. The polypeptide is Potassium voltage-gated channel subfamily A member 2 (KCNA2) (Oryctolagus cuniculus (Rabbit)).